The following is a 128-amino-acid chain: Lymphocyte antigen 6D (128 aa).

The N-terminal stretch at methionine 1 to alanine 20 is a signal peptide. The region spanning leucine 21–serine 108 is the UPAR/Ly6 domain. Disulfide bonds link cysteine 23–cysteine 45, cysteine 26–cysteine 32, cysteine 38–cysteine 63, cysteine 67–cysteine 86, and cysteine 87–cysteine 92. The GPI-anchor amidated serine moiety is linked to residue serine 98. The propeptide at tryptophan 99–leucine 128 is removed in mature form.

It is found in the cell membrane. In terms of biological role, may act as a specification marker at earliest stage specification of lymphocytes between B- and T-cell development. Marks the earliest stage of B-cell specification. The chain is Lymphocyte antigen 6D (LY6D) from Bos taurus (Bovine).